The primary structure comprises 545 residues: 4-coumarate--CoA ligase 1 (545 aa).

Positions 192, 193, 194, 195, 196, and 200 each coordinate ATP. Residues tyrosine 242 and serine 246 each coordinate (E)-4-coumaroyl-AMP. Position 263 (lysine 263) interacts with CoA. Residues 265–334 form an SBD1 region; it reads DIAQFLELIP…AKFPNAKLGQ (70 aa). Positions 312, 334, 335, 339, and 347 each coordinate (E)-4-coumaroyl-AMP. ATP-binding residues include glutamine 334, glycine 335, and threonine 339. The segment at 335–402 is SBD2; that stretch reads GYGMTEAGPV…IRGDQIMKGY (68 aa). 2 residues coordinate ATP: aspartate 423 and arginine 438. Residues lysine 440 and lysine 444 each coordinate (E)-4-coumaroyl-AMP. CoA-binding residues include lysine 446 and glycine 447. Position 529 (lysine 529) interacts with ATP.

Belongs to the ATP-dependent AMP-binding enzyme family. Mg(2+) is required as a cofactor.

The catalysed reaction is (E)-4-coumarate + ATP + CoA = (E)-4-coumaroyl-CoA + AMP + diphosphate. The enzyme catalyses (E)-4-coumarate + ATP + H(+) = (E)-4-coumaroyl-AMP + diphosphate. It catalyses the reaction (E)-4-coumaroyl-AMP + CoA = (E)-4-coumaroyl-CoA + AMP + H(+). The protein operates within phytoalexin biosynthesis; 3,4',5-trihydroxystilbene biosynthesis; 3,4',5-trihydroxystilbene from trans-4-coumarate: step 1/2. Functionally, carboxylate--CoA ligase that may use 4-coumarate as substrate. Follows a two-step reaction mechanism, wherein the carboxylate substrate first undergoes adenylation by ATP, followed by a thioesterification in the presence of CoA to yield the final CoA thioester. In Solanum tuberosum (Potato), this protein is 4-coumarate--CoA ligase 1 (4CL1).